Consider the following 198-residue polypeptide: NADH-quinone oxidoreductase subunit B (198 aa).

Residues cysteine 62, cysteine 63, cysteine 128, and cysteine 158 each contribute to the [4Fe-4S] cluster site.

Belongs to the complex I 20 kDa subunit family. As to quaternary structure, NDH-1 is composed of 14 different subunits. Subunits NuoB, C, D, E, F, and G constitute the peripheral sector of the complex. Requires [4Fe-4S] cluster as cofactor.

The protein localises to the cell inner membrane. The catalysed reaction is a quinone + NADH + 5 H(+)(in) = a quinol + NAD(+) + 4 H(+)(out). Functionally, NDH-1 shuttles electrons from NADH, via FMN and iron-sulfur (Fe-S) centers, to quinones in the respiratory chain. The immediate electron acceptor for the enzyme in this species is believed to be a menaquinone. Couples the redox reaction to proton translocation (for every two electrons transferred, four hydrogen ions are translocated across the cytoplasmic membrane), and thus conserves the redox energy in a proton gradient. The polypeptide is NADH-quinone oxidoreductase subunit B (Phocaeicola vulgatus (strain ATCC 8482 / DSM 1447 / JCM 5826 / CCUG 4940 / NBRC 14291 / NCTC 11154) (Bacteroides vulgatus)).